Consider the following 347-residue polypeptide: MAEITAKLVKELREKSGAGVMDAKKALVETDGDIEKAIELLREKGMAKAAKKADRVAAEGLTGVYVNGNVAAVVEVNAETDFVAKNAQFVDLVNATAKVIAEGKPANNEEALALTMPSGETLEAAYVSATATIGEKISFRRFALIEKTDAQHFGAYQHNGGRIGVISVIEGGDDALAKQISMHIAAMKPTVLSYKELDEQFVKDELAQLNHVIDQDNESRAMVGKPALPHLKYGSKAQLTDAVVAQAEEDIKAELAAEGKPEKIWDKIIPGKMDRFMLDNTKVDQAYTLLAQVYIMDDSKTVEAYLESVNASVVEFARFEVGEGIEKAANDFENEVAATMAAALGQN.

Residues 80-83 form an involved in Mg(2+) ion dislocation from EF-Tu region; it reads TDFV.

This sequence belongs to the EF-Ts family.

It is found in the cytoplasm. In terms of biological role, associates with the EF-Tu.GDP complex and induces the exchange of GDP to GTP. It remains bound to the aminoacyl-tRNA.EF-Tu.GTP complex up to the GTP hydrolysis stage on the ribosome. The polypeptide is Elongation factor Ts (Streptococcus sanguinis (strain SK36)).